Reading from the N-terminus, the 321-residue chain is Gap junction delta-2 protein (321 aa).

Over 1–19 (MGEWTILERLLEAAVQQHS) the chain is Cytoplasmic. A helical membrane pass occupies residues 20 to 42 (TMIGRILLTVVVIFRILIVAIVG). At 43–75 (ETVYDDEQTMFVCNTLQPGCNQACYDRAFPISH) the chain is on the extracellular side. The helical transmembrane segment at 76 to 98 (IRYWVFQIIMVCTPSLCFITYSV) threads the bilayer. At 99 to 197 (HQSAKQRERR…KLRRQEGISR (99 aa)) the chain is on the cytoplasmic side. The tract at residues 118 to 141 (RDPPESIGGPGGTGGGGSGGGKRE) is disordered. Positions 125 to 137 (GGPGGTGGGGSGG) are enriched in gly residues. A helical transmembrane segment spans residues 198-220 (FYIIQVVFRNALEIGFLVGQYFL). The Extracellular segment spans residues 221–252 (YGFSVPGLYECNRYPCIKEVECYVSRPTEKTV). A helical membrane pass occupies residues 253 to 275 (FLVFMFAVSGICVVLNLAELNHL). At 276 to 321 (GWRKIKLAVRGAQAKRKSIYEIRNKDLPRVSVPNFGRTQSSDSAYV) the chain is on the cytoplasmic side.

Belongs to the connexin family. Delta-type subfamily. As to quaternary structure, a connexon is composed of a hexamer of connexins. In terms of tissue distribution, highly expressed in neurons.

It is found in the cell membrane. The protein localises to the cell junction. The protein resides in the gap junction. One gap junction consists of a cluster of closely packed pairs of transmembrane channels, the connexons, through which materials of low MW diffuse from one cell to a neighboring cell. The protein is Gap junction delta-2 protein (GJD2) of Homo sapiens (Human).